A 396-amino-acid polypeptide reads, in one-letter code: Ribosomal RNA large subunit methyltransferase I (396 aa).

A PUA domain is found at 2 to 81; that stretch reads TVSIYLAKGR…EAIDKDFFVR (80 aa).

It belongs to the methyltransferase superfamily. RlmI family.

The protein resides in the cytoplasm. It carries out the reaction cytidine(1962) in 23S rRNA + S-adenosyl-L-methionine = 5-methylcytidine(1962) in 23S rRNA + S-adenosyl-L-homocysteine + H(+). Specifically methylates the cytosine at position 1962 (m5C1962) of 23S rRNA. In Aliivibrio fischeri (strain MJ11) (Vibrio fischeri), this protein is Ribosomal RNA large subunit methyltransferase I.